We begin with the raw amino-acid sequence, 432 residues long: Neuronal pentraxin-1 (432 aa).

A signal peptide spans methionine 1 to alanine 22. The segment at glutamate 90–serine 122 is disordered. Residues asparagine 154 and asparagine 193 are each glycosylated (N-linked (GlcNAc...) asparagine). The Pentraxin (PTX) domain occupies aspartate 226 to cysteine 428. Cysteine 256 and cysteine 316 are disulfide-bonded. Positions 280, 358, 359, 360, and 370 each coordinate Ca(2+).

In terms of assembly, homooligomer or heterooligomer (probably pentamer) with neuronal pentraxin receptor (NPTXR). It depends on Ca(2+) as a cofactor.

The protein localises to the secreted. The protein resides in the cytoplasmic vesicle. It localises to the secretory vesicle. Its subcellular location is the endoplasmic reticulum. May be involved in mediating uptake of synaptic material during synapse remodeling or in mediating the synaptic clustering of AMPA glutamate receptors at a subset of excitatory synapses. The chain is Neuronal pentraxin-1 (NPTX1) from Homo sapiens (Human).